Here is a 563-residue protein sequence, read N- to C-terminus: Adenine deaminase (563 aa).

It belongs to the metallo-dependent hydrolases superfamily. Adenine deaminase family. Requires Mn(2+) as cofactor.

It catalyses the reaction adenine + H2O + H(+) = hypoxanthine + NH4(+). This is Adenine deaminase from Lactiplantibacillus plantarum (strain ATCC BAA-793 / NCIMB 8826 / WCFS1) (Lactobacillus plantarum).